The primary structure comprises 206 residues: Methylthioribulose-1-phosphate dehydratase (206 aa).

The Zn(2+) site is built by His-96 and His-98.

Belongs to the aldolase class II family. MtnB subfamily. The cofactor is Zn(2+).

It carries out the reaction 5-(methylsulfanyl)-D-ribulose 1-phosphate = 5-methylsulfanyl-2,3-dioxopentyl phosphate + H2O. It participates in amino-acid biosynthesis; L-methionine biosynthesis via salvage pathway; L-methionine from S-methyl-5-thio-alpha-D-ribose 1-phosphate: step 2/6. In terms of biological role, catalyzes the dehydration of methylthioribulose-1-phosphate (MTRu-1-P) into 2,3-diketo-5-methylthiopentyl-1-phosphate (DK-MTP-1-P). This is Methylthioribulose-1-phosphate dehydratase from Exiguobacterium sibiricum (strain DSM 17290 / CCUG 55495 / CIP 109462 / JCM 13490 / 255-15).